The following is a 260-amino-acid chain: 14-3-3-like protein (260 aa).

This sequence belongs to the 14-3-3 family.

This is 14-3-3-like protein from Pisum sativum (Garden pea).